We begin with the raw amino-acid sequence, 179 residues long: Large ribosomal subunit protein uL6 (179 aa).

Belongs to the universal ribosomal protein uL6 family. As to quaternary structure, part of the 50S ribosomal subunit.

This protein binds to the 23S rRNA, and is important in its secondary structure. It is located near the subunit interface in the base of the L7/L12 stalk, and near the tRNA binding site of the peptidyltransferase center. The sequence is that of Large ribosomal subunit protein uL6 from Synechococcus sp. (strain CC9311).